The primary structure comprises 227 residues: PKHD-type hydroxylase Reut_B4660 (227 aa).

One can recognise a Fe2OG dioxygenase domain in the interval K78–S178. Residues H96, D98, and H159 each coordinate Fe cation. A 2-oxoglutarate-binding site is contributed by R169.

Fe(2+) serves as cofactor. Requires L-ascorbate as cofactor.

The polypeptide is PKHD-type hydroxylase Reut_B4660 (Cupriavidus pinatubonensis (strain JMP 134 / LMG 1197) (Cupriavidus necator (strain JMP 134))).